We begin with the raw amino-acid sequence, 855 residues long: Valine--tRNA ligase (855 aa).

The 'HIGH' region motif lies at 44–54; it reads PYPTGNFHIGN. The 'KMSKS' region motif lies at 522–526; it reads KMSKS. Lys525 is a binding site for ATP.

It belongs to the class-I aminoacyl-tRNA synthetase family. ValS type 2 subfamily.

It localises to the cytoplasm. It carries out the reaction tRNA(Val) + L-valine + ATP = L-valyl-tRNA(Val) + AMP + diphosphate. Catalyzes the attachment of valine to tRNA(Val). As ValRS can inadvertently accommodate and process structurally similar amino acids such as threonine, to avoid such errors, it has a 'posttransfer' editing activity that hydrolyzes mischarged Thr-tRNA(Val) in a tRNA-dependent manner. The chain is Valine--tRNA ligase from Methanothrix thermoacetophila (strain DSM 6194 / JCM 14653 / NBRC 101360 / PT) (Methanosaeta thermophila).